The chain runs to 309 residues: Homoserine O-succinyltransferase (309 aa).

Catalysis depends on cysteine 142, which acts as the Acyl-thioester intermediate. Residues lysine 163 and serine 192 each contribute to the substrate site. The active-site Proton acceptor is the histidine 235. The active site involves glutamate 237. Substrate is bound at residue arginine 249.

The protein belongs to the MetA family. As to quaternary structure, homodimer.

It is found in the cytoplasm. It catalyses the reaction L-homoserine + succinyl-CoA = O-succinyl-L-homoserine + CoA. The protein operates within amino-acid biosynthesis; L-methionine biosynthesis via de novo pathway; O-succinyl-L-homoserine from L-homoserine: step 1/1. In terms of biological role, transfers a succinyl group from succinyl-CoA to L-homoserine, forming succinyl-L-homoserine. The chain is Homoserine O-succinyltransferase from Escherichia coli O17:K52:H18 (strain UMN026 / ExPEC).